The primary structure comprises 97 residues: uncharacterized protein (97 aa).

This sequence belongs to the mycobacterial PE family.

Part of the ESX-1 / type VII specialized secretion system (T7SS), which exports several proteins including EsxA and EsxB. Plays a role in DNA conjugation, in at least a donor strain. This is an uncharacterized protein from Mycolicibacterium smegmatis (strain ATCC 700084 / mc(2)155) (Mycobacterium smegmatis).